A 537-amino-acid polypeptide reads, in one-letter code: CTP synthase (537 aa).

Residues 1–267 (MTNTKFVFVT…ISVLEERLFG (267 aa)) form an amidoligase domain region. Serine 15 contacts CTP. Serine 15 lines the UTP pocket. 16–21 (SVGKGI) serves as a coordination point for ATP. Tyrosine 56 serves as a coordination point for L-glutamine. Aspartate 73 contributes to the ATP binding site. Residues aspartate 73 and glutamate 141 each contribute to the Mg(2+) site. Residues 148–150 (DIE), 188–193 (KTKPTQ), and lysine 224 contribute to the CTP site. Residues 188–193 (KTKPTQ) and lysine 224 each bind UTP. The Glutamine amidotransferase type-1 domain maps to 297–535 (YVVLPDAYLS…LSEAVAKASP (239 aa)). An L-glutamine-binding site is contributed by glycine 355. Cysteine 382 acts as the Nucleophile; for glutamine hydrolysis in catalysis. L-glutamine contacts are provided by residues 383–386 (LGMQ), glutamate 406, and arginine 463. Active-site residues include histidine 508 and glutamate 510.

It belongs to the CTP synthase family. As to quaternary structure, homotetramer.

The enzyme catalyses UTP + L-glutamine + ATP + H2O = CTP + L-glutamate + ADP + phosphate + 2 H(+). It carries out the reaction L-glutamine + H2O = L-glutamate + NH4(+). It catalyses the reaction UTP + NH4(+) + ATP = CTP + ADP + phosphate + 2 H(+). It participates in pyrimidine metabolism; CTP biosynthesis via de novo pathway; CTP from UDP: step 2/2. Allosterically activated by GTP, when glutamine is the substrate; GTP has no effect on the reaction when ammonia is the substrate. The allosteric effector GTP functions by stabilizing the protein conformation that binds the tetrahedral intermediate(s) formed during glutamine hydrolysis. Inhibited by the product CTP, via allosteric rather than competitive inhibition. Catalyzes the ATP-dependent amination of UTP to CTP with either L-glutamine or ammonia as the source of nitrogen. Regulates intracellular CTP levels through interactions with the four ribonucleotide triphosphates. The sequence is that of CTP synthase from Coprothermobacter proteolyticus (strain ATCC 35245 / DSM 5265 / OCM 4 / BT).